A 284-amino-acid polypeptide reads, in one-letter code: Acetylglutamate kinase (284 aa).

Substrate contacts are provided by residues 64–65, Arg86, and Asn181; that span reads GG.

Belongs to the acetylglutamate kinase family. ArgB subfamily.

The protein resides in the cytoplasm. The enzyme catalyses N-acetyl-L-glutamate + ATP = N-acetyl-L-glutamyl 5-phosphate + ADP. The protein operates within amino-acid biosynthesis; L-arginine biosynthesis; N(2)-acetyl-L-ornithine from L-glutamate: step 2/4. Functionally, catalyzes the ATP-dependent phosphorylation of N-acetyl-L-glutamate. This is Acetylglutamate kinase from Nitratiruptor sp. (strain SB155-2).